We begin with the raw amino-acid sequence, 203 residues long: Mpv17-like protein (203 aa).

Topologically, residues 1–12 (MRILIQFTKRHP) are cytoplasmic. Residues 13 to 30 (WLTNVTIYGSLFASADIV) form a helical membrane-spanning segment. Residues 31-49 (QQKLSKSPTEPIDFKQTAK) lie on the Lumenal side of the membrane. A helical membrane pass occupies residues 50–69 (VGLVGFCFHANFNFFWLRFI). The Cytoplasmic portion of the chain corresponds to 70–89 (ERTFPGSAPLNVIRKVACDQ). The chain crosses the membrane as a helical span at residues 90-107 (LMAAPITISAFYTGLSLL). The Lumenal portion of the chain corresponds to 108-143 (DGERDVFKNLKEKFWPTYKTGVMCWTVFQTINFSVI). Residues 144–166 (PPFVRTAYIGVCAFLWTTFLCYI) form a helical membrane-spanning segment. Residues 167-203 (RNRDINEVTTRLLHAVPNIRGKMAFPQDQDDNKPADK) are Cytoplasmic-facing.

Belongs to the peroxisomal membrane protein PXMP2/4 family.

It is found in the peroxisome membrane. Participates in reactive oxygen species metabolism by up- or down-regulation of the genes of antioxidant enzymes. Protective against the mitochondrial apoptotic cascade. This chain is Mpv17-like protein (mpv17l), found in Xenopus laevis (African clawed frog).